The chain runs to 282 residues: 4-diphosphocytidyl-2-C-methyl-D-erythritol kinase (282 aa).

Lys12 is an active-site residue. 95–105 (PMGGGIGGGSS) contributes to the ATP binding site. The active site involves Asp137.

This sequence belongs to the GHMP kinase family. IspE subfamily.

The catalysed reaction is 4-CDP-2-C-methyl-D-erythritol + ATP = 4-CDP-2-C-methyl-D-erythritol 2-phosphate + ADP + H(+). Its pathway is isoprenoid biosynthesis; isopentenyl diphosphate biosynthesis via DXP pathway; isopentenyl diphosphate from 1-deoxy-D-xylulose 5-phosphate: step 3/6. Catalyzes the phosphorylation of the position 2 hydroxy group of 4-diphosphocytidyl-2C-methyl-D-erythritol. This chain is 4-diphosphocytidyl-2-C-methyl-D-erythritol kinase, found in Pseudomonas aeruginosa (strain ATCC 15692 / DSM 22644 / CIP 104116 / JCM 14847 / LMG 12228 / 1C / PRS 101 / PAO1).